A 170-amino-acid polypeptide reads, in one-letter code: Histone H1.9 (170 aa).

Residues 34–108 (RKPTMSYVIL…GASGSLCLCK (75 aa)) form the H15 domain. A Phosphoserine modification is found at Ser56. The disordered stretch occupies residues 118–140 (AKRCQDRQKSQKPQKPGQRESEP).

This sequence belongs to the histone H1/H5 family. Expressed exclusively in the testis by haploid germ cells (at protein level).

It localises to the nucleus. The protein localises to the chromosome. In terms of biological role, DNA-binding protein that may be implicated in chromatin remodeling and/or transcriptional regulation during spermiogenesis, the process of spermatid maturation into spermatozoa. In Mus musculus (Mouse), this protein is Histone H1.9.